The sequence spans 161 residues: ATP synthase subunit b 1 (161 aa).

Residues 5–25 traverse the membrane as a helical segment; it reads AETWVAVAFVLMVALFIYFGA.

Belongs to the ATPase B chain family. In terms of assembly, F-type ATPases have 2 components, F(1) - the catalytic core - and F(0) - the membrane proton channel. F(1) has five subunits: alpha(3), beta(3), gamma(1), delta(1), epsilon(1). F(0) has three main subunits: a(1), b(2) and c(10-14). The alpha and beta chains form an alternating ring which encloses part of the gamma chain. F(1) is attached to F(0) by a central stalk formed by the gamma and epsilon chains, while a peripheral stalk is formed by the delta and b chains.

Its subcellular location is the cell inner membrane. In terms of biological role, f(1)F(0) ATP synthase produces ATP from ADP in the presence of a proton or sodium gradient. F-type ATPases consist of two structural domains, F(1) containing the extramembraneous catalytic core and F(0) containing the membrane proton channel, linked together by a central stalk and a peripheral stalk. During catalysis, ATP synthesis in the catalytic domain of F(1) is coupled via a rotary mechanism of the central stalk subunits to proton translocation. Component of the F(0) channel, it forms part of the peripheral stalk, linking F(1) to F(0). In Afipia carboxidovorans (strain ATCC 49405 / DSM 1227 / KCTC 32145 / OM5) (Oligotropha carboxidovorans), this protein is ATP synthase subunit b 1.